A 378-amino-acid polypeptide reads, in one-letter code: RIB43A-like with coiled-coils protein 1 (378 aa).

2 coiled-coil regions span residues 153–250 (RMQQ…VTSD) and 279–334 (EQRA…CAEF).

This sequence belongs to the RIB43A family. In terms of assembly, microtubule inner protein component of sperm flagellar doublet microtubules.

It localises to the cytoplasm. The protein localises to the cytoskeleton. Its subcellular location is the flagellum axoneme. The sequence is that of RIB43A-like with coiled-coils protein 1 (Ribc1) from Rattus norvegicus (Rat).